The chain runs to 341 residues: Undecaprenyl-phosphate 4-deoxy-4-formamido-L-arabinose transferase (341 aa).

A run of 2 helical transmembrane segments spans residues 235-255 and 269-289; these read LSIV…ALIV and LFVL…GMGL.

It belongs to the glycosyltransferase 2 family.

It is found in the cell inner membrane. The catalysed reaction is UDP-4-deoxy-4-formamido-beta-L-arabinose + di-trans,octa-cis-undecaprenyl phosphate = 4-deoxy-4-formamido-alpha-L-arabinopyranosyl di-trans,octa-cis-undecaprenyl phosphate + UDP. It functions in the pathway glycolipid biosynthesis; 4-amino-4-deoxy-alpha-L-arabinose undecaprenyl phosphate biosynthesis; 4-amino-4-deoxy-alpha-L-arabinose undecaprenyl phosphate from UDP-4-deoxy-4-formamido-beta-L-arabinose and undecaprenyl phosphate: step 1/2. The protein operates within bacterial outer membrane biogenesis; lipopolysaccharide biosynthesis. Its function is as follows. Catalyzes the transfer of 4-deoxy-4-formamido-L-arabinose from UDP to undecaprenyl phosphate. The modified arabinose is attached to lipid A and is required for resistance to polymyxin and cationic antimicrobial peptides. The protein is Undecaprenyl-phosphate 4-deoxy-4-formamido-L-arabinose transferase of Pseudomonas fluorescens (strain SBW25).